The primary structure comprises 179 residues: Bifunctional protein PyrR (179 aa).

Residues 100–112 (VILVDDVLFTGRT) carry the PRPP-binding motif.

This sequence belongs to the purine/pyrimidine phosphoribosyltransferase family. PyrR subfamily. In terms of assembly, homodimer and homohexamer; in equilibrium.

It catalyses the reaction UMP + diphosphate = 5-phospho-alpha-D-ribose 1-diphosphate + uracil. Regulates transcriptional attenuation of the pyrimidine nucleotide (pyr) operon by binding in a uridine-dependent manner to specific sites on pyr mRNA. This disrupts an antiterminator hairpin in the RNA and favors formation of a downstream transcription terminator, leading to a reduced expression of downstream genes. Its function is as follows. Also displays a weak uracil phosphoribosyltransferase activity which is not physiologically significant. The polypeptide is Bifunctional protein PyrR (Geobacillus thermodenitrificans (strain NG80-2)).